Here is a 148-residue protein sequence, read N- to C-terminus: Auxin-responsive protein SAUR65 (148 aa).

The protein belongs to the ARG7 family.

It is found in the cell membrane. In terms of biological role, may promote auxin-stimulated organ elongation, such as hypocotyls, stamen filaments and petals. In Arabidopsis thaliana (Mouse-ear cress), this protein is Auxin-responsive protein SAUR65.